Here is a 212-residue protein sequence, read N- to C-terminus: Glycerol-3-phosphate acyltransferase (212 aa).

5 helical membrane-spanning segments follow: residues 3–23, 69–89, 110–130, 143–163, and 165–185; these read LILL…LWIG, LLPM…FFAI, AGIL…IFFF, VIAA…HFLL, and DYDF…IIRH.

It belongs to the PlsY family. As to quaternary structure, probably interacts with PlsX.

It localises to the cell membrane. The enzyme catalyses an acyl phosphate + sn-glycerol 3-phosphate = a 1-acyl-sn-glycero-3-phosphate + phosphate. It functions in the pathway lipid metabolism; phospholipid metabolism. In terms of biological role, catalyzes the transfer of an acyl group from acyl-phosphate (acyl-PO(4)) to glycerol-3-phosphate (G3P) to form lysophosphatidic acid (LPA). This enzyme utilizes acyl-phosphate as fatty acyl donor, but not acyl-CoA or acyl-ACP. The sequence is that of Glycerol-3-phosphate acyltransferase from Streptococcus mutans serotype c (strain ATCC 700610 / UA159).